An 882-amino-acid polypeptide reads, in one-letter code: Holliday junction resolvase MOC1, chloroplastic (882 aa).

Disordered stretches follow at residues 87–148 (IRDG…QTPT) and 323–351 (TPAA…PRAA). The span at 91–111 (PNSNSRCSTVRTHATRSKSTG) shows a compositional bias: polar residues. Positions 112–125 (PSRATSSGPATAAP) are enriched in low complexity. Residues 134–148 (NDTQDGGLTSEQTPT) show a composition bias toward polar residues. The span at 323-337 (TPAAASQTPPTTVTS) shows a compositional bias: low complexity. The Mg(2+) site is built by aspartate 397, glutamate 552, asparagine 629, and aspartate 634. Residues 710–882 (KVERKAQARS…DGGVSGSESE (173 aa)) are disordered. Residues 732-743 (EEPEAQAEEEQA) are compositionally biased toward acidic residues. Low complexity-rich tracts occupy residues 744–758 (EAGT…GAAA), 769–783 (VESG…VAAG), 810–819 (SGKSSSKAEA), and 830–844 (ASVG…SVGS). Gly residues-rich tracts occupy residues 845-857 (SSGG…GGVK) and 868-882 (AKAG…SESE).

It depends on Mg(2+) as a cofactor. The cofactor is Mn(2+).

Its subcellular location is the plastid. The protein resides in the chloroplast. The enzyme catalyses Endonucleolytic cleavage at a junction such as a reciprocal single-stranded crossover between two homologous DNA duplexes (Holliday junction).. Its function is as follows. A structure-specific endonuclease that resolves Holliday junction (HJ) intermediates during genetic recombination. Cleaves 4-way DNA junctions introducing paired nicks in opposing strands, leaving a 5'-terminal phosphate and a 3'-terminal hydroxyl group that are ligated to produce recombinant products. Mediates chloroplast nucleoid segregation during chloroplast division. The protein is Holliday junction resolvase MOC1, chloroplastic of Chlamydomonas reinhardtii (Chlamydomonas smithii).